We begin with the raw amino-acid sequence, 623 residues long: Interferon-induced GTP-binding protein Mx3 (623 aa).

In terms of domain architecture, Dynamin-type G spans 31–304 (DLALPAIAVI…LVHHIEKSLP (274 aa)). The tract at residues 41 to 48 (GDQSSGKS) is G1 motif. 41–48 (GDQSSGKS) serves as a coordination point for GTP. The segment at 66–68 (VTR) is G2 motif. Residues 142–145 (DLPG) form a G3 motif region. GTP-binding positions include 142–146 (DLPGI) and 211–214 (TKPD). The tract at residues 211 to 214 (TKPD) is G4 motif. Residues 243-246 (KCRG) are G5 motif. The GED domain maps to 537 to 623 (LQEMMLHLKS…MKARSYLVEF (87 aa)).

Belongs to the TRAFAC class dynamin-like GTPase superfamily. Dynamin/Fzo/YdjA family.

It is found in the cytoplasm. Functionally, does not inhibit strain RB-1 of the fish pathogen, infectious hematopoietic necrosis virus (IHNV). This Oncorhynchus mykiss (Rainbow trout) protein is Interferon-induced GTP-binding protein Mx3.